A 552-amino-acid chain; its full sequence is Hyaluronan synthase 2 (552 aa).

Residues 1-11 lie on the Cytoplasmic side of the membrane; that stretch reads MHCERFLCVLR. The chain crosses the membrane as a helical span at residues 12 to 32; it reads IIGTTLFGVSLLLGITAAYIV. The Extracellular segment spans residues 33-45; the sequence is GYQFIQTDNYYFS. The helical transmembrane segment at 46–66 threads the bilayer; sequence FGLYGAFLASHLIIQSLFAFL. The Cytoplasmic segment spans residues 67–374; that stretch reads EHRKMKKSLE…NAMWFHKHHL (308 aa). At T110 the chain carries Phosphothreonine. A Glycyl lysine isopeptide (Lys-Gly) (interchain with G-Cter in ubiquitin) cross-link involves residue K190. The O-linked (GlcNAc) serine glycan is linked to S221. The residue at position 328 (T328) is a Phosphothreonine. The helical transmembrane segment at 375-395 threads the bilayer; it reads WMTYEAVITGFFPFFLIATVI. At 396-402 the chain is on the extracellular side; sequence QLFYRGK. The helical transmembrane segment at 403 to 423 threads the bilayer; that stretch reads IWNILLFLLTVQLVGLIKSSF. Residues 424–429 are Cytoplasmic-facing; sequence ASCLRG. A helical transmembrane segment spans residues 430–450; that stretch reads NIVMVFMSLYSVLYMSSLLPA. At 451-475 the chain is on the extracellular side; sequence KMFAIATINKAGWGTSGRKTIVVNF. The helical transmembrane segment at 476–496 threads the bilayer; the sequence is IGLIPVSVWFTILLGGVIFTI. Over 497–510 the chain is Cytoplasmic; sequence YKESKKPFSESKQT. A helical transmembrane segment spans residues 511–531; sequence VLIVGTLIYACYWVVLLTLYV. Over 532–552 the chain is Extracellular; the sequence is VLINKCGRRKKGQQYDMVLDV.

Belongs to the NodC/HAS family. As to quaternary structure, homodimer; dimerization promotes enzymatic activity. Forms heterodimer with HAS3. Forms heterodimer with HAS1. Mg(2+) is required as a cofactor. In terms of processing, phosphorylation at Thr-328 is essential for hyaluronan synthase activity. Post-translationally, O-GlcNAcylation at Ser-221 increases the stability of HAS2 and plasma membrane localization. Ubiquitination at Lys-190; this ubiquitination is essential for hyaluronan synthase activity and homo- or hetero-oligomerization. Can also be poly-ubiquitinated. Deubiquitinated by USP17L22/USP17 and USP4. USP17L22/USP17 efficiently removes 'Lys-63'- and 'Lys-48'-linked polyubiquitin chains, whereas USP4 preferentially removes monoubiquitination and, partially, both 'Lys-63'- and 'Lys-48'-linked polyubiquitin chain.

It is found in the cell membrane. The protein localises to the endoplasmic reticulum membrane. Its subcellular location is the vesicle. It localises to the golgi apparatus membrane. The protein resides in the lysosome. The enzyme catalyses [hyaluronan](n) + UDP-N-acetyl-alpha-D-glucosamine = N-acetyl-beta-D-glucosaminyl-(1-&gt;4)-[hyaluronan](n) + UDP + H(+). The catalysed reaction is N-acetyl-beta-D-glucosaminyl-(1-&gt;4)-[hyaluronan](n) + UDP-alpha-D-glucuronate = [hyaluronan](n+1) + UDP + H(+). It participates in glycan biosynthesis; hyaluronan biosynthesis. Its function is as follows. Catalyzes the addition of GlcNAc or GlcUA monosaccharides to the nascent hyaluronan polymer. Therefore, it is essential to hyaluronan synthesis a major component of most extracellular matrices that has a structural role in tissues architectures and regulates cell adhesion, migration and differentiation. This is one of three isoenzymes responsible for cellular hyaluronan synthesis and it is particularly responsible for the synthesis of high molecular mass hyaluronan. This chain is Hyaluronan synthase 2 (Has2), found in Rattus norvegicus (Rat).